The following is a 392-amino-acid chain: Sugar efflux transporter A (392 aa).

Residues 1–10 (MIWIMTMARR) lie on the Cytoplasmic side of the membrane. Residues 11-31 (MNGVYAAFMLVAFMMGVAGAL) traverse the membrane as a helical segment. The Periplasmic segment spans residues 32-48 (QAPTLSLFLSREVGAQP). A helical transmembrane segment spans residues 49-69 (FWIGLFYTVNAIAGIGVSLWL). The Cytoplasmic segment spans residues 70-81 (AKRSDSQGDRRK). A helical membrane pass occupies residues 82-102 (LIIFCCLMAIGNALLFAFNRH). The Periplasmic segment spans residues 103 to 106 (YLTL). A helical membrane pass occupies residues 107–127 (ITCGVLLASLANTAMPQLFAL). Residues 128–149 (AREYADNSAREVVMFSSVMRAQ) are Cytoplasmic-facing. Residues 150–170 (LSLAWVIGPPLAFMLALNYGF) form a helical membrane-spanning segment. Thr-171 is a topological domain (periplasmic). A helical transmembrane segment spans residues 172-192 (VMFSIAAGIFTLSLVLIAFML). The Cytoplasmic segment spans residues 193-219 (PSVARVELPSENALSMQGGWQDSNVRM). The helical transmembrane segment at 220–240 (LFVASTLMWTCNTMYIIDMPL) threads the bilayer. Over 241-251 (WISSELGLPDK) the chain is Periplasmic. The helical transmembrane segment at 252-272 (LAGFLMGTAAGLEIPAMILAG) threads the bilayer. Topologically, residues 273 to 282 (YYVKRYGKRR) are cytoplasmic. A helical membrane pass occupies residues 283–303 (MMVIAVAAGVLFYTGLIFFNS). At 304–308 (RMALM) the chain is on the periplasmic side. The chain crosses the membrane as a helical span at residues 309–329 (TLQLFNAVFIGIVAGIGMLWF). Residues 330-342 (QDLMPGRAGAATT) lie on the Cytoplasmic side of the membrane. The helical transmembrane segment at 343–363 (LFTNSISTGVILAGVIQGAIA) threads the bilayer. Over 364–365 (QS) the chain is Periplasmic. A helical membrane pass occupies residues 366 to 386 (WGHFAVYWVIAVISVVALFLT). Residues 387 to 392 (AKVKDV) are Cytoplasmic-facing.

It belongs to the major facilitator superfamily. Set transporter family.

Its subcellular location is the cell inner membrane. In terms of biological role, involved in the efflux of sugars. The physiological role may be the detoxification of non-metabolizable sugar analogs. Can transport IPTG, lactose and glucose. Has broad substrate specificity, with preferences for glucosides or galactosides with alkyl or aryl substituents. The polypeptide is Sugar efflux transporter A (setA) (Escherichia coli (strain K12)).